A 169-amino-acid chain; its full sequence is Ribosome maturation factor RimM (169 aa).

The PRC barrel domain maps to 97–169; that stretch reads EDEVYFKDLI…KIVVDWEYDY (73 aa).

It belongs to the RimM family. Binds ribosomal protein uS19.

The protein resides in the cytoplasm. Functionally, an accessory protein needed during the final step in the assembly of 30S ribosomal subunit, possibly for assembly of the head region. Essential for efficient processing of 16S rRNA. May be needed both before and after RbfA during the maturation of 16S rRNA. It has affinity for free ribosomal 30S subunits but not for 70S ribosomes. This chain is Ribosome maturation factor RimM, found in Francisella tularensis subsp. tularensis (strain FSC 198).